A 327-amino-acid polypeptide reads, in one-letter code: MQQLTEIVAQALAEVANASDLKALDDIRVDYLGKKGKITDMMKMMGSLSAEEKPAFGQAVNQAKQAVQQTLSERIDGLKASELEAKLIAEKIDVTLPGRTLELGGLHPVTRTIERIETFFGELGFVVKQGPEIEDDFHNFDALNISEHHPARADHDTFYFNPKVMLRTQTSGVQIRTMEHEKPPLRIISPGRVYRNDYDQTHTPMFHQVEGLMVAENVNFAELKGILHDFLRNFFEEDLQVRFRPSYFPFTEPSAEVDVMGKNGKWLEVLGCGMVHPNVLRSVGIDPEKYSGFAFGMGVERLTMLRYGVNDLRAFFENDLRFLKQFK.

A Mg(2+)-binding site is contributed by E252.

The protein belongs to the class-II aminoacyl-tRNA synthetase family. Phe-tRNA synthetase alpha subunit type 1 subfamily. As to quaternary structure, tetramer of two alpha and two beta subunits. Mg(2+) serves as cofactor.

The protein resides in the cytoplasm. It carries out the reaction tRNA(Phe) + L-phenylalanine + ATP = L-phenylalanyl-tRNA(Phe) + AMP + diphosphate + H(+). This Shewanella denitrificans (strain OS217 / ATCC BAA-1090 / DSM 15013) protein is Phenylalanine--tRNA ligase alpha subunit.